The sequence spans 139 residues: MALSMSLSSDILSGAPTAGRGGGCSAALSPRGRGSKGLGTRAPGPRGDGQQPPLGTGGDEDPGAGSASAGGSRLAAAAAAEAAAPGDRSLCWAPRGRLLASSPAGEAGSWGRARRGGPRPGAPCKGLAGPPLRPGLARS.

Residues 1–11 are compositionally biased toward polar residues; sequence MALSMSLSSDI. Disordered stretches follow at residues 1–80 and 100–139; these read MALS…AAAA and ASSP…LARS. Low complexity predominate over residues 63-80; the sequence is GAGSASAGGSRLAAAAAA.

This is an uncharacterized protein from Homo sapiens (Human).